The chain runs to 63 residues: Cecropin-A1 (63 aa).

Positions 1 to 19 (MNFYNIFVFVALILAITIG) are cleaved as a signal peptide. Arg62 carries the arginine amide modification.

It belongs to the cecropin family.

It localises to the secreted. Its function is as follows. Cecropins have lytic and antibacterial activity against several Gram-positive and Gram-negative bacteria. This is Cecropin-A1 (CecA1) from Drosophila simulans (Fruit fly).